A 591-amino-acid chain; its full sequence is Protein enabled homolog (591 aa).

A WH1 domain is found at 1-111 (MSEQSICQAR…SAMMHALEVL (111 aa)). Residues 115–136 (ETGPTLPRQNSQLPAQVQNGPS) are compositionally biased toward polar residues. A disordered region spans residues 115-146 (ETGPTLPRQNSQLPAQVQNGPSQEELEIQRRQ). A Phosphoserine modification is found at S125. Positions 135 to 265 (PSQEELEIQR…LEWERERRIS (131 aa)) form a coiled coil. Tandem repeats lie at residues 156–160 (LERER), 161–165 (LERER), 166–170 (MERER), 171–175 (LERER), 176–180 (LERER), 181–185 (LERER), 186–190 (LEQEQ), 191–195 (LERER), and 196–200 (QERER). Positions 156 to 200 (LERERLERERMERERLERERLERERLERERLEQEQLERERQERER) are 9 X 5 AA tandem repeats of [LMQ]-E-[QR]-E-[QR]. The span at 221–264 (RLDRERQERQERERLERLERERQERERQEQLEREQLEWERERRI) shows a compositional bias: basic and acidic residues. Residues 221 to 379 (RLDRERQERQ…PPLPASGFFL (159 aa)) are disordered. S265 carries the phosphoserine; by PKA modification. Residues 275–305 (TPLNSVLGDSSASEPGLQAASQPAETPSQQG) are compositionally biased toward polar residues. 2 stretches are compositionally biased toward pro residues: residues 311–323 (LAPP…PPGP) and 330–373 (LPPP…PPLP). Residues 391-411 (GLAAAIAGAKLRKVSRMEDTS) are EVH2 block A. An EVH2 region spans residues 391–588 (GLAAAIAGAK…DAIRQELSKS (198 aa)). Residues 400–403 (KLRK) carry the KLKR motif. The interval 405-549 (SRMEDTSFPS…LSQPSANGVQ (145 aa)) is disordered. The span at 432–443 (RGNGPLPLGGSG) shows a compositional bias: gly residues. The EVH2 block B stretch occupies residues 442–459 (SGLMEEMSALLARRRRIA). I465 is subject to Phosphothreonine. 2 positions are modified to phosphoserine: E471 and E475. Polar residues-rich tracts occupy residues 479-491 (PVTS…STPE) and 499-509 (RTNTMNGSKSP). Residue T502 is modified to Phosphothreonine. S506, S508, and S512 each carry phosphoserine. Polar residues predominate over residues 538–549 (TPLSQPSANGVQ). Residues 554-588 (DYDRLKQDILDEMRKELTKLKEELIDAIRQELSKS) form an EVH2 block C region. Residues 557 to 587 (RLKQDILDEMRKELTKLKEELIDAIRQELSK) adopt a coiled-coil conformation.

It belongs to the Ena/VASP family. Homotetramer. Interacts with APBB1IP, APBB1, PFN1 and ROBO4. Isoforms, containing the polyproline-rich regions with PPLP motifs, bind the WW domain of APBB1IP. Isoforms, containing the PPSY motif, bind, in vitro, to the WW2 and WW3 domains of NEDD4 and to the WW1 domain of YAP1. Binds the SH3 domain of BAIAP2-alpha but only after the autoinhibitory region of BAIAP2-alpha has been blocked by interaction with CDC42. Interacts, via the EVH1/WH1 domain, with the Pro-rich domains from VCL, ZYX and Listeria monocytogenes actA and with TES (via LIM domains). The TES LIM domain and the Pro-rich domains from VCL or ZYX compete for the same binding site. Interaction with ZYX is important for targeting ENAH to focal adhesions and enhances production of actin-rich structures at the apical surface of cells. Interacts, through the Pro-rich region, with the C-terminal SH3 domain of DNMPB. Binds GPHN. Interacts with FAT1 (via EVH1 domains). Heterotrimer with TES and ACTL7A. Interacts with PRPF40A. NTN1-induced PKA phosphorylation on Ser-265 directly parallels the formation of filopodial protrusions. Expressed in myoepithelia of parotid, breast, bronchial glands and sweat glands. Expressed in colon-rectum muscolaris mucosae epithelium, pancreas acinar ductal epithelium, endometrium epithelium, prostate fibromuscolar stroma and placenta vascular media. Overexpressed in a majority of breast cancer cell lines and primary breast tumor lesions.

The protein localises to the cytoplasm. Its subcellular location is the cytoskeleton. It localises to the cell projection. It is found in the lamellipodium. The protein resides in the filopodium. The protein localises to the synapse. Its subcellular location is the cell junction. It localises to the focal adhesion. Functionally, ena/VASP proteins are actin-associated proteins involved in a range of processes dependent on cytoskeleton remodeling and cell polarity such as axon guidance and lamellipodial and filopodial dynamics in migrating cells. ENAH induces the formation of F-actin rich outgrowths in fibroblasts. Acts synergistically with BAIAP2-alpha and downstream of NTN1 to promote filipodia formation. The polypeptide is Protein enabled homolog (ENAH) (Homo sapiens (Human)).